The chain runs to 608 residues: Mitochondrial import receptor subunit TOM70 (608 aa).

Position 2 is an N-acetylalanine (Ala2). Residues 2–38 (AASKPVEAAVVAAAVPSSGSGVGGGGTAGPGTGGLPR) lie on the Mitochondrial intermembrane side of the membrane. A helical membrane pass occupies residues 39-59 (WQLALAVGAPLLLGAGAIYLW). Residues 60-608 (SRQQRRREAR…KKYGLKPPTL (549 aa)) are Cytoplasmic-facing. The interval 67-107 (EARGRGDASGLKRNSERKTPEGRASPAPGSGHPEGPGAHLD) is disordered. Arg71 is subject to Omega-N-methylarginine. Residues Ser91, Ser96, and Ser110 each carry the phosphoserine modification. TPR repeat units follow at residues 114–147 (AQAAKNKGNKYFKAGKYEQAIQCYTEAISLCPTE) and 153–186 (STFYQNRAAAFEQLQKWKEVAQDCTKAVELNPKY). Lys185 is subject to N6-acetyllysine. Residue Lys275 forms a Glycyl lysine isopeptide (Lys-Gly) (interchain with G-Cter in SUMO2) linkage. TPR repeat units follow at residues 294–327 (ENSGYLKAKQYMEEENYDKIISECSKEIDAEGKY), 329–362 (AEALLLRATFYLLIGNANAAKPDLDKVISLKEAN), 367–400 (ANALIKRGSMYMQQQQPLLSTQDFNMAADIDPQN), 401–434 (ADVYHHRGQLKILLDQVEEAVADFDECIRLRPES), 440–475 (QKCFALYRQAYTGNNSSQIQAAMKGFEEVIKKFPRC), 476–509 (AEGYALYAQALTDQQQFGKADEMYDKCIDLEPDN), 511–544 (TTYVHKGLLQLQWKQDLDRGLELISKAIEIDNKC), and 545–578 (DFAYETMGTIEVQRGNMEKAIDMFNKAINLAKSE). Ser434 carries the post-translational modification Phosphoserine.

This sequence belongs to the Tom70 family. As to quaternary structure, forms part of the preprotein translocase complex of the outer mitochondrial membrane (TOM complex) which consists of at least 7 different proteins (TOMM5, TOMM6, TOMM7, TOMM20, TOMM22, TOMM40 and TOMM70). Interacts with CAPN8. Interacts with TRADD, TRAF6 and STING. Interacts with MAVS; the interaction is enhanced by Sendai virus infection. Interacts with HSPA8 and HSP90AA1; both interactions are required for preprotein mitochondrial import. The interaction with HSP90AA1 is direct and mediates the association of TOMM70 with IRF3 and TBK1. Upon mitochondrial depolarization, interacts with PINK1; the interaction is required for PINK1-TOM-TIM23 supercomplex formation which is critical for PINK1 stabilization at the outer mitochondrial membrane, kinase activation and downstream mitophagy. (Microbial infection) Interacts (via C-terminus) with SARS coronaviru/SARS-CoV and SARS coronavirus-2/SARS-CoV-2 virus protein ORF9b. In terms of assembly, (Microbial infection) Interacts with parasite T.gondii RH strain MAF1b1; the interaction impairs TOMM70 import activity, enables the parasite to associate with the host mitochondria and facilitates the association of MAF1b1 with MIB complex component SAMM50, promoting the formation of SPOTs (structures positive for outer mitochondrial membrane (OMM)); the interaction is probably indirect.

It localises to the mitochondrion outer membrane. Functionally, acts as a receptor of the preprotein translocase complex of the outer mitochondrial membrane (TOM complex). Recognizes and mediates the translocation of mitochondrial preproteins from the cytosol into the mitochondria in a chaperone dependent manner. Mediates TBK1 and IRF3 activation induced by MAVS in response to Sendai virus infection and promotes host antiviral responses during virus infection. Upon Sendai virus infection, recruits HSP90AA1:IRF3:BAX in mitochondrion and the complex induces apoptosis. The sequence is that of Mitochondrial import receptor subunit TOM70 from Homo sapiens (Human).